Consider the following 437-residue polypeptide: Regulator of phospholipase D SRF1 (437 aa).

The disordered stretch occupies residues 1 to 24 (MGDSNSSQEAYSDTTSTNASRIAD). At 1-267 (MGDSNSSQEA…LTSLLLDNQY (267 aa)) the chain is on the cytoplasmic side. Phosphoserine is present on residues Ser45 and Ser167. The chain crosses the membrane as a helical span at residues 268–288 (LILGLRIFTGILSCISLALAI). Over 289 to 308 (KIFQNSRSNNTISESKIGQQ) the chain is Extracellular. Asn297 carries an N-linked (GlcNAc...) asparagine glycan. The helical transmembrane segment at 309 to 329 (PSTIMAICVNAVAIAYIIYIA) threads the bilayer. Residues 330–348 (HDEFAGKPVGLRNPLSKLK) lie on the Cytoplasmic side of the membrane. The helical transmembrane segment at 349–369 (LILLDLLFIIFSSANLALAFN) threads the bilayer. The Extracellular portion of the chain corresponds to 370–403 (TRFDKEWVCTSIRRSNGSTYGYPKIPRICRKQEA). Residue Asn385 is glycosylated (N-linked (GlcNAc...) asparagine). The helical transmembrane segment at 404-424 (LSAFLFVALFMWVITFSISIV) threads the bilayer. At 425–437 (RVVEKVSSITNRN) the chain is on the cytoplasmic side.

As to quaternary structure, interacts with SPO14.

The protein resides in the membrane. Functionally, regulator of phospholipase D (SPO14) which is required for SPO14 catalytic activity in mitotic cells. Essential to buffer the toxic effects of C16:0 platelet activating factor. This Saccharomyces cerevisiae (strain ATCC 204508 / S288c) (Baker's yeast) protein is Regulator of phospholipase D SRF1 (SRF1).